Here is a 441-residue protein sequence, read N- to C-terminus: Chromosome partition protein MukF (441 aa).

Residues 208–236 are leucine-zipper; it reads LTETSSTLRELQDTLEAAGDKLQTSLLSI.

It belongs to the MukF family. Interacts, and probably forms a ternary complex, with MukE and MukB via its C-terminal region. The complex formation is stimulated by calcium or magnesium. It is required for an interaction between MukE and MukB.

Its subcellular location is the cytoplasm. The protein localises to the nucleoid. Functionally, involved in chromosome condensation, segregation and cell cycle progression. May participate in facilitating chromosome segregation by condensation DNA from both sides of a centrally located replisome during cell division. Not required for mini-F plasmid partitioning. Probably acts via its interaction with MukB and MukE. Overexpression results in anucleate cells. It has a calcium binding activity. The polypeptide is Chromosome partition protein MukF (Pectobacterium atrosepticum (strain SCRI 1043 / ATCC BAA-672) (Erwinia carotovora subsp. atroseptica)).